Reading from the N-terminus, the 203-residue chain is Glycerol-3-phosphate acyltransferase (203 aa).

Transmembrane regions (helical) follow at residues 1-21, 52-72, 73-93, 115-135, 140-160, and 161-181; these read MPAW…GSIP, VGKG…AAAV, ALGS…GAVI, ILLA…LLGI, IVSF…WALG, and QPLP…AAHR.

The protein belongs to the PlsY family. Probably interacts with PlsX.

It localises to the cell inner membrane. It catalyses the reaction an acyl phosphate + sn-glycerol 3-phosphate = a 1-acyl-sn-glycero-3-phosphate + phosphate. It functions in the pathway lipid metabolism; phospholipid metabolism. Its function is as follows. Catalyzes the transfer of an acyl group from acyl-phosphate (acyl-PO(4)) to glycerol-3-phosphate (G3P) to form lysophosphatidic acid (LPA). This enzyme utilizes acyl-phosphate as fatty acyl donor, but not acyl-CoA or acyl-ACP. The protein is Glycerol-3-phosphate acyltransferase of Synechococcus sp. (strain JA-3-3Ab) (Cyanobacteria bacterium Yellowstone A-Prime).